The sequence spans 285 residues: NADPH-dependent 7-cyano-7-deazaguanine reductase (285 aa).

Substrate is bound at residue 80–82; sequence VES. 82–83 provides a ligand contact to NADPH; the sequence is SK. The Thioimide intermediate role is filled by cysteine 191. Aspartate 198 functions as the Proton donor in the catalytic mechanism. 231-232 is a binding site for substrate; the sequence is HE. Residue 260–261 participates in NADPH binding; sequence RG.

It belongs to the GTP cyclohydrolase I family. QueF type 2 subfamily. Homodimer.

It is found in the cytoplasm. The catalysed reaction is 7-aminomethyl-7-carbaguanine + 2 NADP(+) = 7-cyano-7-deazaguanine + 2 NADPH + 3 H(+). Its pathway is tRNA modification; tRNA-queuosine biosynthesis. Catalyzes the NADPH-dependent reduction of 7-cyano-7-deazaguanine (preQ0) to 7-aminomethyl-7-deazaguanine (preQ1). The protein is NADPH-dependent 7-cyano-7-deazaguanine reductase of Psychrobacter cryohalolentis (strain ATCC BAA-1226 / DSM 17306 / VKM B-2378 / K5).